The following is a 396-amino-acid chain: Acetate kinase (396 aa).

Asparagine 7 serves as a coordination point for Mg(2+). Lysine 14 provides a ligand contact to ATP. Arginine 89 contributes to the substrate binding site. The Proton donor/acceptor role is filled by aspartate 146. Residues 206-210 (HLGNG), 280-282 (DLR), and 328-332 (GIGEN) each bind ATP. Glutamate 382 provides a ligand contact to Mg(2+).

It belongs to the acetokinase family. As to quaternary structure, homodimer. It depends on Mg(2+) as a cofactor. Mn(2+) serves as cofactor.

Its subcellular location is the cytoplasm. The catalysed reaction is acetate + ATP = acetyl phosphate + ADP. The protein operates within metabolic intermediate biosynthesis; acetyl-CoA biosynthesis; acetyl-CoA from acetate: step 1/2. Functionally, catalyzes the formation of acetyl phosphate from acetate and ATP. Can also catalyze the reverse reaction. The polypeptide is Acetate kinase (Maridesulfovibrio salexigens (strain ATCC 14822 / DSM 2638 / NCIMB 8403 / VKM B-1763) (Desulfovibrio salexigens)).